A 278-amino-acid chain; its full sequence is Putative transposase for insertion sequence element IS986/IS6110 (278 aa).

One can recognise an Integrase catalytic domain in the interval 101–268; sequence GPPAPNRLWV…VPPVELEAAY (168 aa).

Its function is as follows. Involved in the transposition of the insertion sequence. This Mycobacterium bovis (strain ATCC BAA-935 / AF2122/97) protein is Putative transposase for insertion sequence element IS986/IS6110.